A 342-amino-acid polypeptide reads, in one-letter code: Ketol-acid reductoisomerase (NADP(+)) (342 aa).

The KARI N-terminal Rossmann domain maps to alanine 2 to threonine 182. Residues tyrosine 25–glutamine 28, lysine 48, serine 51, serine 53, and aspartate 83–glutamine 86 contribute to the NADP(+) site. The active site involves histidine 108. Glycine 134 is a binding site for NADP(+). The region spanning threonine 183–asparagine 328 is the KARI C-terminal knotted domain. Mg(2+)-binding residues include aspartate 191, glutamate 195, glutamate 227, and glutamate 231. Substrate is bound at residue serine 252.

Belongs to the ketol-acid reductoisomerase family. Mg(2+) is required as a cofactor.

It carries out the reaction (2R)-2,3-dihydroxy-3-methylbutanoate + NADP(+) = (2S)-2-acetolactate + NADPH + H(+). It catalyses the reaction (2R,3R)-2,3-dihydroxy-3-methylpentanoate + NADP(+) = (S)-2-ethyl-2-hydroxy-3-oxobutanoate + NADPH + H(+). The protein operates within amino-acid biosynthesis; L-isoleucine biosynthesis; L-isoleucine from 2-oxobutanoate: step 2/4. It functions in the pathway amino-acid biosynthesis; L-valine biosynthesis; L-valine from pyruvate: step 2/4. Involved in the biosynthesis of branched-chain amino acids (BCAA). Catalyzes an alkyl-migration followed by a ketol-acid reduction of (S)-2-acetolactate (S2AL) to yield (R)-2,3-dihydroxy-isovalerate. In the isomerase reaction, S2AL is rearranged via a Mg-dependent methyl migration to produce 3-hydroxy-3-methyl-2-ketobutyrate (HMKB). In the reductase reaction, this 2-ketoacid undergoes a metal-dependent reduction by NADPH to yield (R)-2,3-dihydroxy-isovalerate. This is Ketol-acid reductoisomerase (NADP(+)) from Leifsonia xyli subsp. xyli (strain CTCB07).